A 238-amino-acid polypeptide reads, in one-letter code: Adenylate dimethylallyltransferase (238 aa).

This sequence belongs to the isopentenyl transferase family.

It carries out the reaction dimethylallyl diphosphate + AMP = N(6)-(dimethylallyl)adenosine 5'-phosphate + diphosphate. Functionally, transfers dimethylallyl groups to AMP as part of the biosynthesis of cytokinin phytohormones. The polypeptide is Adenylate dimethylallyltransferase (tzs) (Ralstonia solanacearum (Pseudomonas solanacearum)).